We begin with the raw amino-acid sequence, 348 residues long: tRNA (cytosine(34)-C(5))-methyltransferase, mitochondrial (348 aa).

S-adenosyl-L-methionine contacts are provided by residues 139-145 (CAAPGGK), Glu-162, Asp-193, and Asp-211. Catalysis depends on Cys-265, which acts as the Nucleophile.

Belongs to the class I-like SAM-binding methyltransferase superfamily. RsmB/NOP family.

Its subcellular location is the mitochondrion matrix. The enzyme catalyses cytidine(34) in mitochondrial tRNA + S-adenosyl-L-methionine = 5-methylcytidine(34) in mitochondrial tRNA + S-adenosyl-L-homocysteine + H(+). Its function is as follows. Mitochondrial tRNA methyltransferase that mediates methylation of cytosine to 5-methylcytosine (m5C) at position 34 of mt-tRNA(Met). mt-tRNA(Met) methylation at cytosine(34) takes place at the wobble position of the anticodon and initiates the formation of 5-formylcytosine (f(5)c) at this position. mt-tRNA(Met) containing the f(5)c modification at the wobble position enables recognition of the AUA codon in addition to the AUG codon, expanding codon recognition in mitochondrial translation. This Mus musculus (Mouse) protein is tRNA (cytosine(34)-C(5))-methyltransferase, mitochondrial.